A 66-amino-acid chain; its full sequence is MKNKVKELRARFGYSQEKLGETVGVTRQTVAAIEKGDYVPSLLLALKICKAFSMKMEDVFWLEEEN.

The HTH cro/C1-type domain occupies 5–59; sequence VKELRARFGYSQEKLGETVGVTRQTVAAIEKGDYVPSLLLALKICKAFSMKMEDV. A DNA-binding region (H-T-H motif) is located at residues 16–35; sequence QEKLGETVGVTRQTVAAIEK.

This is an uncharacterized protein from Bacillus subtilis (strain 168).